The primary structure comprises 152 residues: Endoribonuclease YbeY (152 aa).

Zn(2+)-binding residues include His-113, His-117, and His-123.

The protein belongs to the endoribonuclease YbeY family. Zn(2+) is required as a cofactor.

It localises to the cytoplasm. Single strand-specific metallo-endoribonuclease involved in late-stage 70S ribosome quality control and in maturation of the 3' terminus of the 16S rRNA. The sequence is that of Endoribonuclease YbeY from Pseudoalteromonas atlantica (strain T6c / ATCC BAA-1087).